The chain runs to 475 residues: PRAME family member 20 (475 aa).

The stretch at 97 to 124 (RWKLQVLDLQDVSENFWMVWSEAMARRC) is one LRR 1; degenerate repeat. One copy of the LRR 2; degenerate repeat lies at 179 to 203 (HLCCKKLKMLGMLFHNIRNILKTVN). The LRR 3; degenerate repeat unit spans residues 204 to 230 (LDCIQEVEVNCNWTLPVLAEFTPYLGQ). The stretch at 231-265 (MRNLRKLVLSDIDSRYISPEQKKEFVTQFTTQFLK) is one LRR 4; degenerate repeat. 5 LRR repeats span residues 266-291 (LRCLQKLYMNSVSFLEGHLDQMLSCL), 292-323 (KTSLNILAITNCVLLESDLKHLSKYPSIGQLK), 324-342 (TLDLSGTRLANFSLVPLQV), 348-375 (AATLEYLDLDDCGIVDSQVNAILPALSR), and 376-400 (CFELTTFSFRGNPISTATLENLLCH).

Belongs to the PRAME family.

This is PRAME family member 20 from Homo sapiens (Human).